We begin with the raw amino-acid sequence, 432 residues long: 3-phosphoshikimate 1-carboxyvinyltransferase (432 aa).

3-phosphoshikimate is bound by residues K23, S24, and R28. Residue K23 participates in phosphoenolpyruvate binding. Phosphoenolpyruvate is bound by residues G96 and R125. Positions 170, 172, 318, and 345 each coordinate 3-phosphoshikimate. Q172 is a phosphoenolpyruvate binding site. The Proton acceptor role is filled by D318. Residues R349 and R391 each contribute to the phosphoenolpyruvate site.

The protein belongs to the EPSP synthase family. Monomer.

It localises to the cytoplasm. It catalyses the reaction 3-phosphoshikimate + phosphoenolpyruvate = 5-O-(1-carboxyvinyl)-3-phosphoshikimate + phosphate. Its pathway is metabolic intermediate biosynthesis; chorismate biosynthesis; chorismate from D-erythrose 4-phosphate and phosphoenolpyruvate: step 6/7. Functionally, catalyzes the transfer of the enolpyruvyl moiety of phosphoenolpyruvate (PEP) to the 5-hydroxyl of shikimate-3-phosphate (S3P) to produce enolpyruvyl shikimate-3-phosphate and inorganic phosphate. This is 3-phosphoshikimate 1-carboxyvinyltransferase from Gloeobacter violaceus (strain ATCC 29082 / PCC 7421).